A 2563-amino-acid chain; its full sequence is Highly reducing polyketide synthase 2 (2563 aa).

A Ketosynthase family 3 (KS3) domain is found at 11–451 (MSDIAIVGYS…GSNSHIVLDD (441 aa)). Catalysis depends on for beta-ketoacyl synthase activity residues Cys182, His317, and His357. One can recognise a Malonyl-CoA:ACP transacylase (MAT) domain in the interval 589–890 (FAFTGQGAQY…DTLSEMSSAS (302 aa)). An N-terminal hotdog fold region spans residues 970-1101 (GELLGVRVSD…ANISVEFQDN (132 aa)). The PKS/mFAS DH domain occupies 970 to 1269 (GELLGVRVSD…TSAVSGGITH (300 aa)). His1002 serves as the catalytic Proton acceptor; for dehydratase activity. Residues 1126 to 1269 (TLPIDPRVFY…TSAVSGGITH (144 aa)) form a C-terminal hotdog fold region. Asp1186 serves as the catalytic Proton donor; for dehydratase activity. The methyltransferase (CMet) domain stretch occupies residues 1296 to 1618 (FAANAVPKDD…FSGNDLVIRD (323 aa)). The region spanning 1858-2168 (GSLDSLQFVE…QEDTSERVIV (311 aa)) is the Enoyl reductase (ER) domain. The Ketoreductase (KR) domain maps to 2192–2370 (STYLVAGGSG…ALSLDIGWMS (179 aa)). Residues 2480-2561 (SDARERQQVV…GVAEVVEARS (82 aa)) enclose the Carrier domain. At Ser2521 the chain carries O-(pantetheine 4'-phosphoryl)serine.

It depends on pantetheine 4'-phosphate as a cofactor.

It functions in the pathway secondary metabolite biosynthesis. Highly reducing polyketide synthase; part of the gene cluster that mediates the biosynthesis of the tetraketides fugralins such as linear fugralin A and cyclic fugralin B, volatile compounds that play a role in the asexual reproductive cycle but are not involved in pathogenicity. One of the key features of fugralins is the presence of a double methyl group, which is only rarely encountered in fungal secondary metabolites. As the fugralins cluster does not contain an independent methyltransferase, the PKS FGR1 is probably responsible for adding two methyl groups to the same carbon atom. Fugralin B is similar to fugralin A except for a cyclization between the carboxylic acid C-8 and the alcohol on C-4 resulting in a six membered lactone ring, probably catalyzed by the cyclase FGR4. The exact role of the individual cluster genes remains unknown and further work is needed to unravel the biosynthetic pathway. The chain is Highly reducing polyketide synthase 2 from Gibberella zeae (strain ATCC MYA-4620 / CBS 123657 / FGSC 9075 / NRRL 31084 / PH-1) (Wheat head blight fungus).